A 268-amino-acid chain; its full sequence is Shikimate dehydrogenase (NADP(+)) (268 aa).

Residues Ser14–Ser16 and Thr61 contribute to the shikimate site. Lys65 functions as the Proton acceptor in the catalytic mechanism. Shikimate contacts are provided by Asn86 and Asp102. Residues Gly126–Ala130, Asn149–Lys154, and Met213 each bind NADP(+). Tyr215 contributes to the shikimate binding site. Residue Gly238 participates in NADP(+) binding.

Belongs to the shikimate dehydrogenase family. In terms of assembly, homodimer.

The catalysed reaction is shikimate + NADP(+) = 3-dehydroshikimate + NADPH + H(+). It participates in metabolic intermediate biosynthesis; chorismate biosynthesis; chorismate from D-erythrose 4-phosphate and phosphoenolpyruvate: step 4/7. Involved in the biosynthesis of the chorismate, which leads to the biosynthesis of aromatic amino acids. Catalyzes the reversible NADPH linked reduction of 3-dehydroshikimate (DHSA) to yield shikimate (SA). This is Shikimate dehydrogenase (NADP(+)) from Haemophilus influenzae (strain PittEE).